The sequence spans 359 residues: Heat-inducible transcription repressor HrcA (359 aa).

It belongs to the HrcA family.

Its function is as follows. Negative regulator of class I heat shock genes (grpE-dnaK-dnaJ and groELS operons). Prevents heat-shock induction of these operons. This Roseiflexus castenholzii (strain DSM 13941 / HLO8) protein is Heat-inducible transcription repressor HrcA.